We begin with the raw amino-acid sequence, 607 residues long: Major facilitator superfamily multidrug transporter mdrA (607 aa).

The next 12 helical transmembrane spans lie at 77 to 97 (MTVA…TGGV), 110 to 130 (VATL…LLWA), 139 to 159 (QIIF…SAGA), 170 to 190 (FFAG…IADM), 202 to 222 (LFAA…GFLG), 229 to 249 (WVMG…TIFV), 305 to 325 (PIVF…YMLF), 342 to 362 (VSSL…TYSV), 385 to 405 (LPPT…FAWT), 413 to 433 (IVCI…FLGI), 443 to 463 (IFAA…GAVF), and 478 to 498 (WASS…FLFY). Residues 523–583 (EQMKQAPEPE…ASTRTASSLR (61 aa)) form a disordered region. Residues 553-564 (DVSETESNVEEL) show a composition bias toward acidic residues. The segment covering 572–583 (SRASTRTASSLR) has biased composition (low complexity).

Belongs to the major facilitator superfamily. DHA1 family. Polyamines/proton antiporter (TC 2.A.1.2.16) subfamily.

The protein resides in the cell membrane. In terms of biological role, MFS transporter involved in the basal level of azole susceptibility. Confers resistance to voriconazole and, to a lesser extent, to fluconazole. The chain is Major facilitator superfamily multidrug transporter mdrA from Aspergillus fumigatus (strain ATCC MYA-4609 / CBS 101355 / FGSC A1100 / Af293) (Neosartorya fumigata).